Here is a 384-residue protein sequence, read N- to C-terminus: ATP phosphoribosyltransferase regulatory subunit (384 aa).

The protein belongs to the class-II aminoacyl-tRNA synthetase family. HisZ subfamily. As to quaternary structure, heteromultimer composed of HisG and HisZ subunits.

Its subcellular location is the cytoplasm. Its pathway is amino-acid biosynthesis; L-histidine biosynthesis; L-histidine from 5-phospho-alpha-D-ribose 1-diphosphate: step 1/9. Required for the first step of histidine biosynthesis. May allow the feedback regulation of ATP phosphoribosyltransferase activity by histidine. The polypeptide is ATP phosphoribosyltransferase regulatory subunit (Azoarcus sp. (strain BH72)).